We begin with the raw amino-acid sequence, 207 residues long: ConoCAP (207 aa).

An N-terminal signal peptide occupies residues Met-1–Ala-21. Residues Asp-22–Ser-48 constitute a propeptide that is removed on maturation. A disulfide bridge links Cys-53 with Cys-59. Gly-60 is subject to Glycine amide. Positions His-63–Ala-82 are excised as a propeptide. Cys-87 and Cys-92 are oxidised to a cystine. Asn-94 carries the post-translational modification Asparagine amide. The propeptide occupies Ser-98–Ser-160. The segment at Ala-131–Ala-155 is disordered. Residues Arg-143–Asp-152 are compositionally biased toward basic and acidic residues. An intrachain disulfide couples Cys-165 to Cys-171. Position 173 is a glycine amide (Gly-173). A propeptide spanning residues Thr-177–Glu-207 is cleaved from the precursor.

Expressed by the venom duct.

It localises to the secreted. In contrast to other members of the CCAP family which are cardio-accelerators, conoCAP-a decreases the heart frequency in Drosophila larvae (26%), rats and zebrafish embryos. It also reduces the blood pressure in rats. It decreases systolic calcium in ventricular cardiac myocytes, indicating that it may act via impairment of intracellular calcium trafficking. In terms of biological role, synthetic conoCAP-b decreases the heart frequency of 23% in Drosophila larvae. Functionally, synthetic conoCAP-c decreases the heart frequency of 12% in Drosophila larvae. This is ConoCAP (conoCAP) from Conus villepinii (Villepin's cone).